The following is a 154-amino-acid chain: S-ribosylhomocysteine lyase (154 aa).

Residues His-58, His-62, and Cys-125 each coordinate Fe cation.

This sequence belongs to the LuxS family. In terms of assembly, homodimer. Fe cation is required as a cofactor.

It catalyses the reaction S-(5-deoxy-D-ribos-5-yl)-L-homocysteine = (S)-4,5-dihydroxypentane-2,3-dione + L-homocysteine. Its function is as follows. Involved in the synthesis of autoinducer 2 (AI-2) which is secreted by bacteria and is used to communicate both the cell density and the metabolic potential of the environment. The regulation of gene expression in response to changes in cell density is called quorum sensing. Catalyzes the transformation of S-ribosylhomocysteine (RHC) to homocysteine (HC) and 4,5-dihydroxy-2,3-pentadione (DPD). The polypeptide is S-ribosylhomocysteine lyase (Dichelobacter nodosus (strain VCS1703A)).